The sequence spans 329 residues: BTB/POZ domain-containing adapter for CUL3-mediated RhoA degradation protein 1 (329 aa).

The span at 1–22 shows a compositional bias: low complexity; the sequence is MSAEASGPAAAAAPSLEAPKPS. The disordered stretch occupies residues 1–31; that stretch reads MSAEASGPAAAAAPSLEAPKPSGLEPGPAAY. Residues 41 to 109 form the BTB domain; it reads KYVKLNVGGS…LRDGSVPLPE (69 aa). Residues 282 to 303 form a disordered region; it reads ATGGAAGAGGAGRGEDEENREH.

It belongs to the BACURD family. Homotetramer; forms a two-fold symmetric tetramer in solution. Interacts with CUL3; interaction is direct and forms a 5:5 heterodecamer. Component of the BCR(KCTD13) E3 ubiquitin ligase complex, at least composed of CUL3, KCTD13/BACURD1 and RBX1. Interacts with RHOA; with a preference for RhoA-GDP. Interacts with POLD2 and PCNA. Interacts with SPRTN. In terms of tissue distribution, expressed in a wide variety of tissues.

The protein resides in the nucleus. It participates in protein modification; protein ubiquitination. Functionally, substrate-specific adapter of a BCR (BTB-CUL3-RBX1) E3 ubiquitin-protein ligase complex required for synaptic transmission. The BCR(KCTD13) E3 ubiquitin ligase complex mediates the ubiquitination of RHOA, leading to its degradation by the proteasome Degradation of RHOA regulates the actin cytoskeleton and promotes synaptic transmission. In Homo sapiens (Human), this protein is BTB/POZ domain-containing adapter for CUL3-mediated RhoA degradation protein 1 (KCTD13).